The chain runs to 159 residues: RNA pyrophosphohydrolase (159 aa).

Positions 6–149 (GFRPNVGIIL…KREVYRRALK (144 aa)) constitute a Nudix hydrolase domain. The Nudix box motif lies at 38-59 (GGINPDETPEDALYRELNEEVG).

The protein belongs to the Nudix hydrolase family. RppH subfamily. A divalent metal cation is required as a cofactor.

In terms of biological role, accelerates the degradation of transcripts by removing pyrophosphate from the 5'-end of triphosphorylated RNA, leading to a more labile monophosphorylated state that can stimulate subsequent ribonuclease cleavage. The sequence is that of RNA pyrophosphohydrolase from Pseudomonas fluorescens (strain ATCC BAA-477 / NRRL B-23932 / Pf-5).